A 496-amino-acid polypeptide reads, in one-letter code: Probable ATP-dependent DNA helicase RecS (496 aa).

The 168-residue stretch at 25–192 (IESILSGKDT…MNLLELQHAV (168 aa)) folds into the Helicase ATP-binding domain. 38 to 45 (LPTGGGKS) is an ATP binding site. The DEAH box signature appears at 136–139 (DEAH). Residues 219-363 (RVIQLVENLQ…EIADVIRVLE (145 aa)) enclose the Helicase C-terminal domain.

It belongs to the helicase family. RecQ subfamily. Interacts with SSB (ssbA) and YpbB.

Its subcellular location is the cytoplasm. It is found in the nucleoid. The enzyme catalyses Couples ATP hydrolysis with the unwinding of duplex DNA by translocating in the 3'-5' direction.. It carries out the reaction ATP + H2O = ADP + phosphate + H(+). Probable 3'-5' DNA helicase. Required in synaptic and/or post-synaptic stages of recombination. Probably has an overlapping function with RecQ. It probably acts to help generate ss-DNA from ds-DNA breaks. This Bacillus subtilis (strain 168) protein is Probable ATP-dependent DNA helicase RecS.